The sequence spans 717 residues: Probable E3 ubiquitin-protein ligase WAVH2 (717 aa).

Polar residues-rich tracts occupy residues 13–28 (VSSN…SLHT) and 85–94 (RTTSNATPRT). A disordered region spans residues 13 to 120 (VSSNQDKPQQ…SSSSSSSQGG (108 aa)). A compositionally biased stretch (low complexity) spans 95-117 (SNSSSPKFFSNPSSPKSSSSSSS). The segment at 140-184 (CAICLQRVNSNQSNSTAAIFTAECSHSFHLSCVNGLEDKRCPFCS) adopts an RING-type; atypical zinc-finger fold. The VWFA domain occupies 326 to 456 (DLVTVLDLSN…LNATRIPFVV (131 aa)).

Expressed in root tips, cotyledons, leaf primordia and hypocotyls.

It carries out the reaction S-ubiquitinyl-[E2 ubiquitin-conjugating enzyme]-L-cysteine + [acceptor protein]-L-lysine = [E2 ubiquitin-conjugating enzyme]-L-cysteine + N(6)-ubiquitinyl-[acceptor protein]-L-lysine.. Functionally, probable E3 ubiquitin-protein ligase involved in the regulation of root growth. Acts as a positive regulator of root gravitropism. In Arabidopsis thaliana (Mouse-ear cress), this protein is Probable E3 ubiquitin-protein ligase WAVH2.